Consider the following 271-residue polypeptide: Metal-staphylopine import system ATP-binding protein CntD (271 aa).

In terms of domain architecture, ABC transporter spans 6 to 251 (VKHLTITDTW…PEHVYTKYLL (246 aa)). 38-45 (GESGSGKS) contributes to the ATP binding site.

This sequence belongs to the ABC transporter superfamily. In terms of assembly, the complex is composed of two ATP-binding proteins (CntD and CntF), two transmembrane proteins (CntB and CntC) and a solute-binding protein (CntA).

The protein localises to the cell membrane. Nickel/cobalt import is reduced in the presence of zinc. Its function is as follows. Part of the ABC transporter complex CntABCDF (Opp1) involved in the uptake of metal in complex with the metallophore staphylopine (StP). Involved in the import of divalent metals ions such as nickel, cobalt and zinc. Probably responsible for energy coupling to the transport system. Plays a major role in nickel/cobalt import in zinc-depleted conditions. Contributes to virulence. Required for full urease activity in vitro. This Staphylococcus aureus (strain NCTC 8325 / PS 47) protein is Metal-staphylopine import system ATP-binding protein CntD.